The following is a 197-amino-acid chain: Probable GTP-binding protein EngB (197 aa).

Residues 25–197 (SAPEIAFAGR…VRDEFFKFTR (173 aa)) form the EngB-type G domain. GTP contacts are provided by residues 33–40 (GRSNVGKS), 60–64 (GCTRQ), 79–82 (DLPG), 146–149 (TKID), and 177–179 (ISV). Residues serine 40 and threonine 62 each coordinate Mg(2+).

Belongs to the TRAFAC class TrmE-Era-EngA-EngB-Septin-like GTPase superfamily. EngB GTPase family. The cofactor is Mg(2+).

Necessary for normal cell division and for the maintenance of normal septation. The chain is Probable GTP-binding protein EngB from Wolbachia sp. subsp. Brugia malayi (strain TRS).